The primary structure comprises 328 residues: Phenylalanine--tRNA ligase alpha subunit (328 aa).

Position 245 (Glu-245) interacts with Mg(2+).

This sequence belongs to the class-II aminoacyl-tRNA synthetase family. Phe-tRNA synthetase alpha subunit type 1 subfamily. Tetramer of two alpha and two beta subunits. Mg(2+) is required as a cofactor.

The protein localises to the cytoplasm. The enzyme catalyses tRNA(Phe) + L-phenylalanine + ATP = L-phenylalanyl-tRNA(Phe) + AMP + diphosphate + H(+). This is Phenylalanine--tRNA ligase alpha subunit (pheS) from Helicobacter pylori (strain ATCC 700392 / 26695) (Campylobacter pylori).